The sequence spans 480 residues: Vinorine hydroxylase (480 aa).

A helical transmembrane segment spans residues 3–23; the sequence is LLQILLAIAGLLAILLLQKQW. Residue Cys-418 coordinates heme.

The protein belongs to the cytochrome P450 family. Heme is required as a cofactor. As to expression, mainly expressed in roots and, to a lesser extent, in leaves.

It localises to the membrane. The enzyme catalyses vinorine + reduced [NADPH--hemoprotein reductase] + O2 = vomilenine + oxidized [NADPH--hemoprotein reductase] + H2O + H(+). It catalyses the reaction vomilenine = perakine. It participates in alkaloid biosynthesis; ajmaline biosynthesis. A cytochrome P450 monooxygenase involved in the biosynthesis of ajmaline-type monoterpenoid indole alkaloids (MIAs) natural products, important plant-derived pharmaceuticals used in the therapy of heart disorders. Catalyzes the hydroxylation of vinorine to vomilenine, an intermediate chemical in the biosynthesis of ajmaline. Supports also vomilenine isomerization to perakine. This Rauvolfia serpentina (Serpentine wood) protein is Vinorine hydroxylase.